The primary structure comprises 175 residues: Alkyl hydroperoxide reductase AhpD (175 aa).

C131 functions as the Proton donor in the catalytic mechanism. The cysteines at positions 131 and 134 are disulfide-linked. The active-site Cysteine sulfenic acid (-SOH) intermediate is the C134.

Belongs to the AhpD family.

It catalyses the reaction N(6)-[(R)-dihydrolipoyl]-L-lysyl-[lipoyl-carrier protein] + a hydroperoxide = N(6)-[(R)-lipoyl]-L-lysyl-[lipoyl-carrier protein] + an alcohol + H2O. Functionally, antioxidant protein with alkyl hydroperoxidase activity. Required for the reduction of the AhpC active site cysteine residues and for the regeneration of the AhpC enzyme activity. In Brucella melitensis biotype 1 (strain ATCC 23456 / CCUG 17765 / NCTC 10094 / 16M), this protein is Alkyl hydroperoxide reductase AhpD.